A 312-amino-acid chain; its full sequence is Malate dehydrogenase (312 aa).

NAD(+) contacts are provided by residues 7–13 (GAAGGIG) and aspartate 34. Positions 81 and 87 each coordinate substrate. NAD(+)-binding positions include asparagine 94 and 117-119 (ITN). Substrate-binding residues include asparagine 119 and arginine 153. Histidine 177 serves as the catalytic Proton acceptor. Methionine 227 is a binding site for NAD(+).

This sequence belongs to the LDH/MDH superfamily. MDH type 1 family. As to quaternary structure, homodimer.

It carries out the reaction (S)-malate + NAD(+) = oxaloacetate + NADH + H(+). In terms of biological role, catalyzes the reversible oxidation of malate to oxaloacetate. The chain is Malate dehydrogenase from Escherichia coli (strain 55989 / EAEC).